Reading from the N-terminus, the 391-residue chain is 3-ketoacyl-CoA thiolase (391 aa).

The active-site Acyl-thioester intermediate is the Cys-90. Residues His-347 and Cys-377 each act as proton acceptor in the active site.

This sequence belongs to the thiolase-like superfamily. Thiolase family.

It catalyses the reaction an acyl-CoA + acetyl-CoA = a 3-oxoacyl-CoA + CoA. The protein operates within lipid metabolism; fatty acid beta-oxidation. Involved in the degradation of long-chain fatty acids. The chain is 3-ketoacyl-CoA thiolase (fadA) from Bacillus subtilis (strain 168).